A 370-amino-acid chain; its full sequence is NADH-quinone oxidoreductase subunit D (370 aa).

This sequence belongs to the complex I 49 kDa subunit family. NDH-1 is composed of 14 different subunits. Subunits NuoB, C, D, E, F, and G constitute the peripheral sector of the complex.

It is found in the cell membrane. It catalyses the reaction a quinone + NADH + 5 H(+)(in) = a quinol + NAD(+) + 4 H(+)(out). In terms of biological role, NDH-1 shuttles electrons from NADH, via FMN and iron-sulfur (Fe-S) centers, to quinones in the respiratory chain. The immediate electron acceptor for the enzyme in this species is believed to be a menaquinone. Couples the redox reaction to proton translocation (for every two electrons transferred, four hydrogen ions are translocated across the cytoplasmic membrane), and thus conserves the redox energy in a proton gradient. The protein is NADH-quinone oxidoreductase subunit D of Clostridium beijerinckii (strain ATCC 51743 / NCIMB 8052) (Clostridium acetobutylicum).